The primary structure comprises 1016 residues: UvrABC system protein A (1016 aa).

Residue 32–39 participates in ATP binding; the sequence is GVSGSGKS. The C4-type zinc finger occupies 259 to 286; that stretch reads CPEHGSVLEELEPRSFSFNSPYGACGDC. ABC transporter domains lie at 315–627 and 647–975; these read WTKK…KNSL and GNGK…EYLR. 679 to 686 lines the ATP pocket; the sequence is GPSGSGKS. The segment at 778–804 adopts a C4-type zinc-finger fold; the sequence is CEHCKGDGVMKIEMNFLPDIYVPCEVC. Positions 984 to 1016 are disordered; sequence EPRARGEKAEKPAKAKAPAKKRTKKQTELVEAD. A compositionally biased stretch (basic and acidic residues) spans 985 to 996; the sequence is PRARGEKAEKPA.

This sequence belongs to the ABC transporter superfamily. UvrA family. Forms a heterotetramer with UvrB during the search for lesions.

It is found in the cytoplasm. Functionally, the UvrABC repair system catalyzes the recognition and processing of DNA lesions. UvrA is an ATPase and a DNA-binding protein. A damage recognition complex composed of 2 UvrA and 2 UvrB subunits scans DNA for abnormalities. When the presence of a lesion has been verified by UvrB, the UvrA molecules dissociate. This Deinococcus radiodurans (strain ATCC 13939 / DSM 20539 / JCM 16871 / CCUG 27074 / LMG 4051 / NBRC 15346 / NCIMB 9279 / VKM B-1422 / R1) protein is UvrABC system protein A.